Consider the following 101-residue polypeptide: Small ribosomal subunit protein uS14 (101 aa).

This sequence belongs to the universal ribosomal protein uS14 family. Part of the 30S ribosomal subunit. Contacts proteins S3 and S10.

Binds 16S rRNA, required for the assembly of 30S particles and may also be responsible for determining the conformation of the 16S rRNA at the A site. The protein is Small ribosomal subunit protein uS14 of Brucella abortus (strain S19).